Here is a 118-residue protein sequence, read N- to C-terminus: Putative pterin-4-alpha-carbinolamine dehydratase (118 aa).

It belongs to the pterin-4-alpha-carbinolamine dehydratase family.

It catalyses the reaction (4aS,6R)-4a-hydroxy-L-erythro-5,6,7,8-tetrahydrobiopterin = (6R)-L-erythro-6,7-dihydrobiopterin + H2O. This chain is Putative pterin-4-alpha-carbinolamine dehydratase, found in Xanthomonas campestris pv. campestris (strain B100).